Reading from the N-terminus, the 409-residue chain is NADH-quinone oxidoreductase subunit D (409 aa).

Belongs to the complex I 49 kDa subunit family. NDH-1 is composed of 14 different subunits. Subunits NuoB, C, D, E, F, and G constitute the peripheral sector of the complex.

It is found in the cell inner membrane. It catalyses the reaction a quinone + NADH + 5 H(+)(in) = a quinol + NAD(+) + 4 H(+)(out). Functionally, NDH-1 shuttles electrons from NADH, via FMN and iron-sulfur (Fe-S) centers, to quinones in the respiratory chain. The immediate electron acceptor for the enzyme in this species is believed to be ubiquinone. Couples the redox reaction to proton translocation (for every two electrons transferred, four hydrogen ions are translocated across the cytoplasmic membrane), and thus conserves the redox energy in a proton gradient. The sequence is that of NADH-quinone oxidoreductase subunit D from Sulfurovum sp. (strain NBC37-1).